The sequence spans 301 residues: tRNA dimethylallyltransferase 1 (301 aa).

11–18 lines the ATP pocket; sequence GPTGVGKT. 13-18 contributes to the substrate binding site; that stretch reads TGVGKT. Residues 36-39 are interaction with substrate tRNA; sequence DSRQ.

Belongs to the IPP transferase family. In terms of assembly, monomer. Mg(2+) serves as cofactor.

It carries out the reaction adenosine(37) in tRNA + dimethylallyl diphosphate = N(6)-dimethylallyladenosine(37) in tRNA + diphosphate. Functionally, catalyzes the transfer of a dimethylallyl group onto the adenine at position 37 in tRNAs that read codons beginning with uridine, leading to the formation of N6-(dimethylallyl)adenosine (i(6)A). In Bacteroides fragilis (strain YCH46), this protein is tRNA dimethylallyltransferase 1.